A 255-amino-acid polypeptide reads, in one-letter code: tRNA pseudouridine synthase A (255 aa).

Residue Asp-52 is the Nucleophile of the active site. Residue Tyr-111 coordinates substrate.

Belongs to the tRNA pseudouridine synthase TruA family. As to quaternary structure, homodimer.

The catalysed reaction is uridine(38/39/40) in tRNA = pseudouridine(38/39/40) in tRNA. Its function is as follows. Formation of pseudouridine at positions 38, 39 and 40 in the anticodon stem and loop of transfer RNAs. The polypeptide is tRNA pseudouridine synthase A (Nitrobacter winogradskyi (strain ATCC 25391 / DSM 10237 / CIP 104748 / NCIMB 11846 / Nb-255)).